Reading from the N-terminus, the 383-residue chain is BRISC and BRCA1-A complex member 2 (383 aa).

Residue methionine 1 is modified to N-acetylmethionine. At serine 2 the chain carries Phosphoserine. 2 UEV-like regions span residues 30 to 147 (DATN…TLLE) and 275 to 364 (IAAF…RAKA).

Belongs to the BABAM2 family. As to quaternary structure, component of the ARISC complex, at least composed of UIMC1/RAP80, ABRAXAS1, BRCC3/BRCC36, BABAM2 and BABAM1/NBA1. Component of the BRCA1-A complex, at least composed of BRCA1, BARD1, UIMC1/RAP80, ABRAXAS1, BRCC3/BRCC36, BABAM2 and BABAM1/NBA1. In the BRCA1-A complex, interacts directly with ABRAXAS1, BRCC3/BRCC36 and BABAM1/NBA1. Binds polyubiquitin. Component of the BRISC complex, at least composed of ABRAXAS2, BRCC3/BRCC36, BABAM2 and BABAM1/NBA1. Identified in a complex with SHMT2 and the other subunits of the BRISC complex. Component of the BRCA1/BRCA2 containing complex (BRCC), which also contains BRCA1, BRCA2, BARD1, BRCC3/BRCC36 and RAD51. BRCC is a ubiquitin E3 ligase complex that enhances cellular survival following DNA damage. May interact with FAS and TNFRSF1A. Expressed in brain, heart, kidney, liver, lung, testis, germinal center B-cells and various mouse cell lines.

The protein resides in the cytoplasm. Its subcellular location is the nucleus. Functionally, component of the BRCA1-A complex, a complex that specifically recognizes 'Lys-63'-linked ubiquitinated histones H2A and H2AX at DNA lesions sites, leading to target the BRCA1-BARD1 heterodimer to sites of DNA damage at double-strand breaks (DSBs). The BRCA1-A complex also possesses deubiquitinase activity that specifically removes 'Lys-63'-linked ubiquitin on histones H2A and H2AX. In the BRCA1-A complex, it acts as an adapter that bridges the interaction between BABAM1/NBA1 and the rest of the complex, thereby being required for the complex integrity and modulating the E3 ubiquitin ligase activity of the BRCA1-BARD1 heterodimer. Probably also plays a role as a component of the BRISC complex, a multiprotein complex that specifically cleaves 'Lys-63'-linked ubiquitin. May regulate TNF-alpha signaling through its interactions with TNFRSF1A. Its function is as follows. Component of the BRCA1-A complex, a complex that specifically recognizes 'Lys-63'-linked ubiquitinated histones H2A and H2AX at DNA lesions sites, leading to target the BRCA1-BARD1 heterodimer to sites of DNA damage at double-strand breaks (DSBs). The BRCA1-A complex also possesses deubiquitinase activity that specifically removes 'Lys-63'-linked ubiquitin on histones H2A and H2AX. In the BRCA1-A complex, it acts as an adapter that bridges the interaction between BABAM1/NBA1 and the rest of the complex, thereby being required for the complex integrity and modulating the E3 ubiquitin ligase activity of the BRCA1-BARD1 heterodimer. Component of the BRISC complex, a multiprotein complex that specifically cleaves 'Lys-63'-linked ubiquitin in various substrates. Within the BRISC complex, acts as an adapter that bridges the interaction between BABAM1/NBA1 and the rest of the complex, thereby being required for the complex integrity. The BRISC complex is required for normal mitotic spindle assembly and microtubule attachment to kinetochores via its role in deubiquitinating NUMA1. The BRISC complex plays a role in interferon signaling via its role in the deubiquitination of the interferon receptor IFNAR1; deubiquitination increases IFNAR1 activity by enhancing its stability and cell surface expression. Down-regulates the response to bacterial lipopolysaccharide (LPS) via its role in IFNAR1 deubiquitination. May play a role in homeostasis or cellular differentiation in cells of neural, epithelial and germline origins. May also act as a death receptor-associated anti-apoptotic protein, which inhibits the mitochondrial apoptotic pathway. May regulate TNF-alpha signaling through its interactions with TNFRSF1A; however these effects may be indirect. The protein is BRISC and BRCA1-A complex member 2 (Babam2) of Mus musculus (Mouse).